The sequence spans 95 residues: Large ribosomal subunit protein uL23 (95 aa).

It belongs to the universal ribosomal protein uL23 family. In terms of assembly, part of the 50S ribosomal subunit. Contacts protein L29, and trigger factor when it is bound to the ribosome.

Its function is as follows. One of the early assembly proteins it binds 23S rRNA. One of the proteins that surrounds the polypeptide exit tunnel on the outside of the ribosome. Forms the main docking site for trigger factor binding to the ribosome. The protein is Large ribosomal subunit protein uL23 of Solibacter usitatus (strain Ellin6076).